The primary structure comprises 588 residues: MMRSHYCGALNRSHIGQQVILSGWVHKRRDLGGLIFIDMRDREGIVQVCFDPKYQEALTEASALRNEFCIKIEGEVIARPDNQINKNMATGEVEVVAKALSVYNVSDVLPLDFNQNNTEEQRLKYRYLDLRRPEMAQHLKTRAKITAFVRRYMDENGFLDIETPMLTKATPEGARDYLVPSRVHKGKFYALPQSPQLFKQLLMMSGFDRYYQIVKCFRDEDLRADRQPEFTQIDVETSFMTAPEVREIMEKMVHGLWLNTIGVDLGKFPTMTWQEAMERFGSDKPDLRNPLEIVDVADIVKDIDFNVFSDPANSSNGRVAVIRVPNGINITRKQIDEYTQFVGIYGAKGLAWVKINDINAGLEGVQSPIAKFLTTEKIKAIFDRTSAQSDDILFFGADKWQTATDAMGALRLKLGRDLGLTHLDEWKPLWVIDFPMFERDEEGNLAAMHHPFTSPKDFTPEQLEANPTSAVANAYDMVINGYEVGGGSVRIFDPKMQQTVFHILGIDEDQQREKFGFLLDALKFGTPPHAGLAFGLDRLTMLLTGTDNIRDVIAFPKTTAAACLMTDAPSLANEKALEELAIKVTRSE.

E172 lines the L-aspartate pocket. The segment at 196–199 (QLFK) is aspartate. Residue R218 participates in L-aspartate binding. Residues 218 to 220 (RDE) and Q227 contribute to the ATP site. H449 is a binding site for L-aspartate. E483 serves as a coordination point for ATP. R490 lines the L-aspartate pocket. 535-538 (GLDR) is an ATP binding site.

It belongs to the class-II aminoacyl-tRNA synthetase family. Type 1 subfamily. In terms of assembly, homodimer.

The protein localises to the cytoplasm. It catalyses the reaction tRNA(Asp) + L-aspartate + ATP = L-aspartyl-tRNA(Asp) + AMP + diphosphate. Functionally, catalyzes the attachment of L-aspartate to tRNA(Asp) in a two-step reaction: L-aspartate is first activated by ATP to form Asp-AMP and then transferred to the acceptor end of tRNA(Asp). The protein is Aspartate--tRNA ligase of Histophilus somni (strain 2336) (Haemophilus somnus).